We begin with the raw amino-acid sequence, 281 residues long: uncharacterized protein (281 aa).

Positions 1–23 are cleaved as a signal peptide; it reads MKLYRSLKAALLPGICTSILLAS. Cysteine 24 carries the N-palmitoyl cysteine lipid modification. A lipid anchor (S-diacylglycerol cysteine) is attached at cysteine 24. Positions 145–165 are disordered; it reads HHDHNHMHNHEHEHEEHHDEE. Residues 150–161 are compositionally biased toward basic and acidic residues; that stretch reads HMHNHEHEHEEH.

The protein resides in the cell membrane. This is an uncharacterized protein from Mycoplasma genitalium (strain ATCC 33530 / DSM 19775 / NCTC 10195 / G37) (Mycoplasmoides genitalium).